Here is a 369-residue protein sequence, read N- to C-terminus: Peptidyl-prolyl cis-trans isomerase D (369 aa).

Positions 7–175 constitute a PPIase cyclophilin-type domain; that stretch reads YFDISCNGKP…EDWKIADCGE (169 aa). TPR repeat units follow at residues 217–250, 268–301, and 306–339; these read VSKIKDIGTKLLKEGKLEKSYEKYTKANSYLNDY, LSCYLNAALVALKLKHGKDAIAAANNALEVEQID, and TKALYRKGMGYILVKDEEQAQKILEEALELEPND.

Belongs to the cyclophilin-type PPIase family. PPIase D subfamily.

Its subcellular location is the cytoplasm. It catalyses the reaction [protein]-peptidylproline (omega=180) = [protein]-peptidylproline (omega=0). In terms of biological role, PPIases accelerate the folding of proteins. It catalyzes the cis-trans isomerization of proline imidic peptide bonds in oligopeptides. This is Peptidyl-prolyl cis-trans isomerase D (CPR6) from Candida albicans (strain SC5314 / ATCC MYA-2876) (Yeast).